Consider the following 446-residue polypeptide: Tubulin alpha-1B chain (446 aa).

GTP is bound at residue Q11. The interval 34-55 (GRLMDDSPSKHDSGSTFFSETG) is disordered. Over residues 35–46 (RLMDDSPSKHDS) the composition is skewed to basic and acidic residues. GTP is bound by residues E69, S138, G142, T143, S177, N204, and N226. E69 serves as a coordination point for Mg(2+). The active site involves E252.

This sequence belongs to the tubulin family. Dimer of alpha and beta chains. A typical microtubule is a hollow water-filled tube with an outer diameter of 25 nm and an inner diameter of 15 nM. Alpha-beta heterodimers associate head-to-tail to form protofilaments running lengthwise along the microtubule wall with the beta-tubulin subunit facing the microtubule plus end conferring a structural polarity. Microtubules usually have 13 protofilaments but different protofilament numbers can be found in some organisms and specialized cells. The cofactor is Mg(2+).

The protein localises to the cytoplasm. It is found in the cytoskeleton. The enzyme catalyses GTP + H2O = GDP + phosphate + H(+). In terms of biological role, tubulin is the major constituent of microtubules, a cylinder consisting of laterally associated linear protofilaments composed of alpha- and beta-tubulin heterodimers. Microtubules grow by the addition of GTP-tubulin dimers to the microtubule end, where a stabilizing cap forms. Below the cap, tubulin dimers are in GDP-bound state, owing to GTPase activity of alpha-tubulin. This is Tubulin alpha-1B chain (TUB-1B) from Schizophyllum commune (Split gill fungus).